A 188-amino-acid polypeptide reads, in one-letter code: Glandular kallikrein-3, submandibular (188 aa).

A Peptidase S1 domain is found at 1–185 (NYHVLLGQNN…FTSWIKEVMK (185 aa)). N-linked (GlcNAc...) asparagine glycosylation is found at asparagine 10 and asparagine 36. Aspartate 47 (charge relay system) is an active-site residue. Cystine bridges form between cysteine 79–cysteine 146, cysteine 111–cysteine 125, and cysteine 136–cysteine 161. Serine 140 acts as the Charge relay system in catalysis.

Belongs to the peptidase S1 family. Kallikrein subfamily.

It catalyses the reaction Preferential cleavage of Arg-|-Xaa bonds in small molecule substrates. Highly selective action to release kallidin (lysyl-bradykinin) from kininogen involves hydrolysis of Met-|-Xaa or Leu-|-Xaa.. Glandular kallikreins cleave Met-Lys and Arg-Ser bonds in kininogen to release Lys-bradykinin. The protein is Glandular kallikrein-3, submandibular (Klk3) of Rattus norvegicus (Rat).